The chain runs to 135 residues: DNA-binding protein H-NS homolog (135 aa).

Residues 112 to 117 mediate DNA binding; that stretch reads QGRTPS.

It belongs to the histone-like protein H-NS family. As to quaternary structure, homodimer that oligomerizes on DNA into higher-order complexes that form bridges between disparate regions of DNA compacting it.

It is found in the cytoplasm. The protein localises to the nucleoid. Its function is as follows. A DNA-binding protein implicated in transcriptional repression and chromosome organization and compaction. Binds nucleation sites in AT-rich DNA and bridges them, forming higher-order nucleoprotein complexes and condensing the chromosome. A subset of genes are repressed by H-NS in association with other proteins. This Buchnera aphidicola subsp. Acyrthosiphon pisum (strain APS) (Acyrthosiphon pisum symbiotic bacterium) protein is DNA-binding protein H-NS homolog (hns).